We begin with the raw amino-acid sequence, 737 residues long: Translation initiation factor IF-2 (737 aa).

Residues 55–152 form a disordered region; it reads KKKEHIQHNK…PVPPRKNKPL (98 aa). Residues 60 to 70 show a composition bias toward basic and acidic residues; it reads IQHNKNKDNFH. Residues 88–98 show a composition bias toward basic residues; sequence KNVHKNNRKRS. Over residues 105 to 121 the composition is skewed to low complexity; that stretch reads NNNAKNGQRNNRNNRSN. Residues 122-131 are compositionally biased toward basic residues; the sequence is NKFKNKRNNN. A compositionally biased stretch (low complexity) spans 132 to 142; sequence NKRNNNFKKGN. The region spanning 238-407 is the tr-type G domain; it reads KRPPVVTIMG…LLEAEMLELH (170 aa). A G1 region spans residues 247-254; that stretch reads GHVDHGKT. GTP is bound at residue 247 to 254; the sequence is GHVDHGKT. The segment at 272-276 is G2; that stretch reads GITQH. The interval 293–296 is G3; that stretch reads DTPG. GTP is bound by residues 293 to 297 and 347 to 350; these read DTPGH and NKID. Residues 347-350 are G4; the sequence is NKID. The G5 stretch occupies residues 383 to 385; it reads SAK.

The protein belongs to the TRAFAC class translation factor GTPase superfamily. Classic translation factor GTPase family. IF-2 subfamily.

It is found in the cytoplasm. In terms of biological role, one of the essential components for the initiation of protein synthesis. Protects formylmethionyl-tRNA from spontaneous hydrolysis and promotes its binding to the 30S ribosomal subunits. Also involved in the hydrolysis of GTP during the formation of the 70S ribosomal complex. This is Translation initiation factor IF-2 from Ligilactobacillus salivarius (strain UCC118) (Lactobacillus salivarius).